The following is a 630-amino-acid chain: Low affinity heme transporter str3 (630 aa).

Residues 1-26 (MEAKETHSISDHEVELQDAKPEEKSE) are compositionally biased toward basic and acidic residues. The disordered stretch occupies residues 1-51 (MEAKETHSISDHEVELQDAKPEEKSENGNFVFEKAFSSDEEKGSGYNTNET). Residues 1–79 (MEAKETHSIS…VRDSIYQNKR (79 aa)) lie on the Cytoplasmic side of the membrane. Phosphoserine is present on residues Ser-10 and Ser-38. A helical membrane pass occupies residues 80-100 (GMYLAYAFGIAILACSWASAI). At 101–120 (QSSTTYSYQVYATASFNRTS) the chain is on the extracellular side. The chain crosses the membrane as a helical span at residues 121–141 (MISTLEIATAIISSVCKPILG). At 142 to 154 (KFSDITSRPMTYT) the chain is on the cytoplasmic side. A helical transmembrane segment spans residues 155–175 (LVLLFYVIGFIVVASSSTISA). A topological domain (extracellular) is located at residue Tyr-176. A helical transmembrane segment spans residues 177–197 (VIGSVFISIGSSGLDYLNTLV). Topologically, residues 198 to 208 (VGDLTSLKWRG) are cytoplasmic. The chain crosses the membrane as a helical span at residues 209 to 229 (FMTALLSTPYIATVWFTGFIV). At 230–241 (QGIIDSNWRWGY) the chain is on the extracellular side. A helical membrane pass occupies residues 242 to 262 (GMFAIIMPAVMTPAVIILMYL). The Cytoplasmic segment spans residues 263–302 (ERQANKDENIKKIINYQTEEKNKNKQSKWQKLWKAVLEVD). The helical transmembrane segment at 303–323 (LFGLILLGVGWSILLLPFSLT) threads the bilayer. Over 324–335 (SYAKNGWKNPSM) the chain is Extracellular. The chain crosses the membrane as a helical span at residues 336-356 (IAMMVVGGVILIAYSGYEMFI). The Cytoplasmic segment spans residues 357–370 (APYPSCPRRVMNRT). A helical transmembrane segment spans residues 371-391 (FITAVIIDFFYYLAGYLQSMY). Residues 392 to 406 (FTTYTWILYDWSYRD) lie on the Extracellular side of the membrane. Residues 407-427 (WTYFNNTMTIALCVFGVFAGA) traverse the membrane as a helical segment. Over 428-439 (MHRVFHRYKYLQ) the chain is Cytoplasmic. Residues 440–460 (IIGLVIKIVGYGILIRPNFAA) traverse the membrane as a helical segment. Over 461 to 465 (TGKVD) the chain is Extracellular. Residues 466 to 486 (LAWSLILIGMGGSFSVVGSQV) form a helical membrane-spanning segment. The Cytoplasmic portion of the chain corresponds to 487–502 (SCQASVPHQDLAIASS). Residues 503–523 (LLPLYTNIGGAIGAAIASPIF) form a helical membrane-spanning segment. A heme binding region spans residues 522–576 (IFSNKVPKYLREYLPSSINDTQVYNFYSDSSLIREYPVGTEIRDGAIKAYSRSMF). Topologically, residues 524-574 (SNKVPKYLREYLPSSINDTQVYNFYSDSSLIREYPVGTEIRDGAIKAYSRS) are extracellular. Residues 575-595 (MFFLLVPAVSLSFIPLAAAFW) form a helical membrane-spanning segment. Topologically, residues 596-630 (QSNFYLGNQQNAVEGDQDHKKKGDKETTQEEKIII) are cytoplasmic. Residues 610 to 630 (GDQDHKKKGDKETTQEEKIII) form a disordered region. The span at 611–630 (DQDHKKKGDKETTQEEKIII) shows a compositional bias: basic and acidic residues.

The protein belongs to the major facilitator superfamily.

It is found in the cell membrane. Low affinity heme transporter involved in the assimilation of exogenous heme during conditions of low cellular iron. This Schizosaccharomyces pombe (strain 972 / ATCC 24843) (Fission yeast) protein is Low affinity heme transporter str3.